The primary structure comprises 2365 residues: TRIO and F-actin-binding protein (2365 aa).

Disordered stretches follow at residues 48 to 1106, 1168 to 1554, 1593 to 1667, and 1679 to 1751; these read VPYC…HEPL, HRDA…SERR, LPRK…WPKI, and AGLE…TSWR. Over residues 132–151 the composition is skewed to low complexity; the sequence is SDPTSSPDSATPDDTSNSSS. His-221 carries the phosphothreonine modification. Composition is skewed to polar residues over residues 239-271, 291-375, 403-422, 429-471, 478-520, 527-569, 576-618, 625-650, 661-674, 683-701, 709-722, 745-785, and 807-837; these read TLTQ…QAAS, RASS…TPQR, RTSC…SPNR, RTSC…SPRT, SSPN…NPRT, RASS…TSCA, and IRAT…PKTS. An essentiel for its aggregation region spans residues 324–348; it reads STQEDTPRASSTQWNTPRASSPSRS. The residue at position 457 (Gln-457) is a Phosphothreonine. The segment covering 839 to 854 has biased composition (basic and acidic residues); it reads TKRDNLRPTCTQRDRT. Polar residues-rich tracts occupy residues 855 to 898, 913 to 927, and 945 to 994; these read QSFS…SSPH, PTQS…PSRS, and DRPQ…TSSP. Residues 1045 to 1056 show a composition bias toward basic and acidic residues; it reads RAPESEPPHHEP. The span at 1195 to 1206 shows a compositional bias: polar residues; sequence SMESLAPSTDSL. 2 stretches are compositionally biased toward basic and acidic residues: residues 1260-1270 and 1303-1319; these read ETRHNLEREEY and GRAE…RKSE. Positions 1332–1349 are enriched in low complexity; the sequence is SQQPSQGQSQLLRRQSSP. Composition is skewed to basic and acidic residues over residues 1378-1387 and 1402-1411; these read SPEKRPEGDR and TPERELRTQR. Residues 1452-1461 are compositionally biased toward gly residues; sequence GGLGPGGWWG. Residues 1494–1508 are compositionally biased toward basic and acidic residues; that stretch reads WEEKPTHELPRELGK. Polar residues predominate over residues 1524–1534; the sequence is ESSQSWHSGTP. Basic and acidic residues predominate over residues 1594-1606; sequence PRKDPAGHRDDLA. Over residues 1645–1664 the composition is skewed to polar residues; it reads ALQSQSPVQLPSPACTSTQW. A compositionally biased stretch (low complexity) spans 1696-1705; that stretch reads PSLPELQFQP. Over residues 1724-1735 the composition is skewed to basic and acidic residues; the sequence is KQADSADKRPAE. The PH domain occupies 1778 to 1887; that stretch reads LNFKKGWMSI…WIEALRKTVR (110 aa). Ser-1796 is modified (phosphoserine). Disordered regions lie at residues 1889–2017 and 2174–2194; these read TSAP…LTED and LSKT…HQSD. Arg-1930 is modified (omega-N-methylarginine). Phosphoserine occurs at positions 1949 and 1955. The span at 1965–1997 shows a compositional bias: basic and acidic residues; the sequence is TPDRLAKQEELERDLAQRSEERRKWFEATDSRT. Coiled coils occupy residues 2062–2247 and 2281–2361; these read SDGH…NQEL and ELEV…SMRN.

As to quaternary structure, isoform 1 forms aggregates. Isoform 1 binds to TRIO and F-actin. Isoform 1 may also interact with myosin II. Interacts with HECTD3. Interacts with PJVK. Interacts with TERF1; mediates TERF1 localization to the centrosome. Ubiquitinated by HECTD3, leading to its degradation by the proteasome. Post-translationally, phosphorylation at Thr-457 by PLK1 ensures mitotic progression and is essential for accurate chromosome segregation. Phosphorylation at residues Thr-221 and Thr-457 by kinase NEK2A and PLK1 coordinates TERF1 translocation from telomere to spindle pole. Widely expressed. Highly expressed in heart and placenta. In terms of tissue distribution, expressed in fetal brain, retina and cochlea but is not detectable in the other tissues.

The protein localises to the nucleus. Its subcellular location is the cytoplasm. It localises to the cytoskeleton. The protein resides in the microtubule organizing center. It is found in the centrosome. The protein localises to the midbody. Its subcellular location is the chromosome. It localises to the telomere. In terms of biological role, regulates actin cytoskeletal organization, cell spreading and cell contraction by directly binding and stabilizing filamentous F-actin and prevents its depolymerization. May also serve as a linker protein to recruit proteins required for F-actin formation and turnover. Essential for correct mitotic progression. Functionally, plays a pivotal role in the formation of stereocilia rootlets. The protein is TRIO and F-actin-binding protein (TRIOBP) of Homo sapiens (Human).